The primary structure comprises 904 residues: Envelope glycoprotein B (904 aa).

The signal sequence occupies residues 1–30 (MRQGAPARGCRWFVVWALLGLTLGVLVASA). Positions 31–65 (APSSPGTPGVAAATQAANGGPATPAPPALGAAPTG) are enriched in low complexity. The interval 31-88 (APSSPGTPGVAAATQAANGGPATPAPPALGAAPTGDPKPKKNKKPKNPTPPRPAGDNA) is disordered. At 31–774 (APSSPGTPGV…SGVSSFMSNP (744 aa)) the chain is on the virion surface side. 2 N-linked (GlcNAc...) asparagine; by host glycosylation sites follow: Asn-87 and Asn-141. Cystine bridges form between Cys-116–Cys-573, Cys-133–Cys-529, Cys-207–Cys-271, Cys-364–Cys-412, and Cys-596–Cys-633. Involved in fusion and/or binding to host membrane stretches follow at residues 173–179 (VWFGHRY) and 258–265 (RVEAFHRY). N-linked (GlcNAc...) asparagine; by host glycans are attached at residues Asn-398 and Asn-430. Positions 470–492 (REQSRKPPNPTPPPPGASANASV) are disordered. The span at 476-485 (PPNPTPPPPG) shows a compositional bias: pro residues. The N-linked (GlcNAc...) asparagine; by host glycan is linked to Asn-489. An N-linked (GlcNAc...) asparagine; by host glycan is attached at Asn-674. The interval 719 to 772 (IDTVIHADANAAMFAGLGAFFEGMGDLGRAVGKVVMGIVGGVVSAVSGVSSFMS) is hydrophobic membrane proximal region. The chain crosses the membrane as a helical span at residues 775–795 (FGALAVGLLVLAGLAAAFFAF). The Intravirion segment spans residues 796–904 (RYVMRLQSNP…KDGDADEDDL (109 aa)). The Golgi targeting motif lies at 849–852 (YMAL). The tract at residues 883-904 (KRRNTNYTQVPNKDGDADEDDL) is disordered. An Internalization motif motif is present at residues 889–892 (YTQV).

This sequence belongs to the herpesviridae glycoprotein B family. Homotrimer; disulfide-linked. Interacts with host receptor MYH9/NMMHC-IIA. Interacts with host receptor MYH10/NMMHC-IIB. Binds to heparan sulfate proteoglycans. Interacts with gH/gL heterodimer. In terms of processing, the cytoplasmic tail is phosphorylated by the viral kinase US3. Phosphorylation may be linked to a down-regulation of gB expression on cell surface. Ubiquitinated.

The protein localises to the virion membrane. Its subcellular location is the host cell membrane. The protein resides in the host endosome membrane. It is found in the host Golgi apparatus membrane. Envelope glycoprotein that forms spikes at the surface of virion envelope and binds to the host cell entry receptors MYH9/NMMHC-IIA and MYH10/NMMHC-IIB, promoting the virus entry into host cells. Essential for the initial attachment to heparan sulfate moieties of the host cell surface proteoglycans. Involved in fusion of viral and cellular membranes leading to virus entry into the host cell: following initial binding to its host cell entry receptors, membrane fusion is mediated by the fusion machinery composed at least of gB and the heterodimer gH/gL. May be involved in the fusion between the virion envelope and the outer nuclear membrane during virion egress. Also plays a role, together with gK, in virus-induced cell-to-cell fusion (syncytia formation). The polypeptide is Envelope glycoprotein B (Homo sapiens (Human)).